A 275-amino-acid chain; its full sequence is Multivesicular body subunit 12A (275 aa).

An MABP domain is found at 5-145 (STPITGLAWI…GLVFWCRKGS (141 aa)). An SH3-binding motif is present at residues 151 to 156 (PTPKPR). The UMA domain maps to 216–267 (IDGIPFTIHPMFENTINNSSVAASDFRDLHIKTLSEIESEYNYGFVVEKTAA).

Belongs to the MVB12 family. As to quaternary structure, component of the ESCRT-I complex (endosomal sorting complex required for transport I).

It is found in the cytoplasm. The protein localises to the endosome. Its subcellular location is the late endosome membrane. Its function is as follows. Component of the ESCRT-I complex, a regulator of vesicular trafficking process. Required for the sorting of endocytic ubiquitinated cargos into multivesicular bodies. This Xenopus laevis (African clawed frog) protein is Multivesicular body subunit 12A (mvb12a).